A 73-amino-acid polypeptide reads, in one-letter code: Large ribosomal subunit protein bL31 (73 aa).

Zn(2+)-binding residues include C16, C18, C38, and C41.

Belongs to the bacterial ribosomal protein bL31 family. Type A subfamily. In terms of assembly, part of the 50S ribosomal subunit. The cofactor is Zn(2+).

Its function is as follows. Binds the 23S rRNA. The polypeptide is Large ribosomal subunit protein bL31 (Vibrio vulnificus (strain YJ016)).